We begin with the raw amino-acid sequence, 82 residues long: UPF0153 protein VC_1057 (82 aa).

This sequence belongs to the UPF0153 family.

The sequence is that of UPF0153 protein VC_1057 from Vibrio cholerae serotype O1 (strain ATCC 39315 / El Tor Inaba N16961).